Here is a 467-residue protein sequence, read N- to C-terminus: Zinc finger protein mex-6 (467 aa).

2 stretches are compositionally biased toward low complexity: residues 1–22 (MTAT…ATAQ) and 179–195 (STTR…LPTS). Disordered regions lie at residues 1-35 (MTAT…QQHP) and 163-209 (TNPQ…NRNS). The residue at position 190 (Thr190) is a Phosphothreonine. Positions 196–207 (REYETVQRDRNR) are enriched in basic and acidic residues. C3H1-type zinc fingers lie at residues 273–302 (NFKT…HGLK) and 317–347 (KYKT…HPSD). Residues 425–451 (INENDLPPHLRRIRRGNPPVTRSRPSF) form a disordered region. Ser457 is modified (phosphoserine).

As to quaternary structure, interacts (probably when phosphorylated on Thr-190) with plk-1 (via POLO box domain) and plk-2 (via POLO box domain). Post-translationally, phosphorylation on Ser-457 by par-1 promotes localization of the protein to the anterior cytoplasm of the zygote.

It is found in the cytoplasm. Functionally, functions with mex-5 to affect embryonic viability, establish soma germline asymmetry in embryos and establish plk-1, pie-1, mex-1, and pos-1 asymmetry in embryos. Also affects formation of intestinal cells. The chain is Zinc finger protein mex-6 (mex-6) from Caenorhabditis elegans.